Reading from the N-terminus, the 130-residue chain is DNA-directed RNA polymerase subunit omega (130 aa).

A disordered region spans residues 110-130 (EELLKGLEGLAPPEEQPEEEE).

It belongs to the RNA polymerase subunit omega family. As to quaternary structure, the RNAP catalytic core consists of 2 alpha, 1 beta, 1 beta' and 1 omega subunit. When a sigma factor is associated with the core the holoenzyme is formed, which can initiate transcription.

The catalysed reaction is RNA(n) + a ribonucleoside 5'-triphosphate = RNA(n+1) + diphosphate. In terms of biological role, promotes RNA polymerase assembly. Latches the N- and C-terminal regions of the beta' subunit thereby facilitating its interaction with the beta and alpha subunits. In Afipia carboxidovorans (strain ATCC 49405 / DSM 1227 / KCTC 32145 / OM5) (Oligotropha carboxidovorans), this protein is DNA-directed RNA polymerase subunit omega.